We begin with the raw amino-acid sequence, 442 residues long: UDP-N-acetylmuramoylalanine--D-glutamate ligase (442 aa).

An ATP-binding site is contributed by 115–121 (GSNGKST).

It belongs to the MurCDEF family.

It is found in the cytoplasm. The enzyme catalyses UDP-N-acetyl-alpha-D-muramoyl-L-alanine + D-glutamate + ATP = UDP-N-acetyl-alpha-D-muramoyl-L-alanyl-D-glutamate + ADP + phosphate + H(+). The protein operates within cell wall biogenesis; peptidoglycan biosynthesis. In terms of biological role, cell wall formation. Catalyzes the addition of glutamate to the nucleotide precursor UDP-N-acetylmuramoyl-L-alanine (UMA). The sequence is that of UDP-N-acetylmuramoylalanine--D-glutamate ligase from Aliivibrio salmonicida (strain LFI1238) (Vibrio salmonicida (strain LFI1238)).